We begin with the raw amino-acid sequence, 413 residues long: Putative glutamate synthase [NADPH] small chain (413 aa).

The [4Fe-4S] cluster site is built by Cys-33, Cys-37, Cys-43, and Cys-47.

Aggregate of 4 catalytic active heterodimers, consisting of a large and a small subunit. Requires [4Fe-4S] cluster as cofactor.

It catalyses the reaction 2 L-glutamate + NADP(+) = L-glutamine + 2-oxoglutarate + NADPH + H(+). It participates in amino-acid biosynthesis; L-glutamate biosynthesis via GLT pathway; L-glutamate from 2-oxoglutarate and L-glutamine (NADP(+) route): step 1/1. Its pathway is energy metabolism; nitrogen metabolism. This is Putative glutamate synthase [NADPH] small chain (gltD) from Cereibacter sphaeroides (Rhodobacter sphaeroides).